The sequence spans 529 residues: Structure-specific endonuclease subunit SLX1 homolog 1 (529 aa).

One can recognise a GIY-YIG domain in the interval 4 to 89 (RFHCVYLLTS…PTKSTRLKTQ (86 aa)). The segment at 231–364 (CALCSLPLRS…PCQPCPCPLC (134 aa)) adopts an SLX1-type zinc-finger fold. 3 disordered regions span residues 275–305 (VTMG…MDAH), 409–437 (NSSL…YCGD), and 470–501 (SVSL…RMTD). Positions 282-297 (RNERSGEYSNKIKDDS) are enriched in basic and acidic residues.

It belongs to the SLX1 family. In terms of assembly, forms a heterodimer with a member of the SLX4 family. A divalent metal cation serves as cofactor.

The protein resides in the nucleus. In terms of biological role, catalytic subunit of a heterodimeric structure-specific endonuclease that resolves DNA secondary structures generated during DNA repair and recombination. Has endonuclease activity towards branched DNA substrates, introducing single-strand cuts in duplex DNA close to junctions with ss-DNA. The chain is Structure-specific endonuclease subunit SLX1 homolog 1 from Trypanosoma cruzi (strain CL Brener).